Reading from the N-terminus, the 272-residue chain is 1,4-dihydroxy-2-naphthoyl-CoA synthase (272 aa).

Substrate is bound by residues R33, 72-76 (SGGDQ), Y84, 116-120 (YAIGG), T142, S148, Y245, and K260. 141-143 (QTG) provides a ligand contact to hydrogencarbonate.

It belongs to the enoyl-CoA hydratase/isomerase family. MenB subfamily. The cofactor is hydrogencarbonate.

It catalyses the reaction 2-succinylbenzoyl-CoA + H(+) = 1,4-dihydroxy-2-naphthoyl-CoA + H2O. Its pathway is quinol/quinone metabolism; 1,4-dihydroxy-2-naphthoate biosynthesis; 1,4-dihydroxy-2-naphthoate from chorismate: step 6/7. The protein operates within quinol/quinone metabolism; menaquinone biosynthesis. Converts o-succinylbenzoyl-CoA (OSB-CoA) to 1,4-dihydroxy-2-naphthoyl-CoA (DHNA-CoA). In Staphylococcus epidermidis (strain ATCC 35984 / DSM 28319 / BCRC 17069 / CCUG 31568 / BM 3577 / RP62A), this protein is 1,4-dihydroxy-2-naphthoyl-CoA synthase.